Consider the following 233-residue polypeptide: Phosphoribosylformylglycinamidine synthase subunit PurQ (233 aa).

Residues 3–233 enclose the Glutamine amidotransferase type-1 domain; it reads SAILVFPGIN…GLVEHLAKAA (231 aa). The Nucleophile role is filled by Cys87. Residues His204 and Glu206 contribute to the active site.

In terms of assembly, part of the FGAM synthase complex composed of 1 PurL, 1 PurQ and 2 PurS subunits.

The protein resides in the cytoplasm. The enzyme catalyses N(2)-formyl-N(1)-(5-phospho-beta-D-ribosyl)glycinamide + L-glutamine + ATP + H2O = 2-formamido-N(1)-(5-O-phospho-beta-D-ribosyl)acetamidine + L-glutamate + ADP + phosphate + H(+). It catalyses the reaction L-glutamine + H2O = L-glutamate + NH4(+). Its pathway is purine metabolism; IMP biosynthesis via de novo pathway; 5-amino-1-(5-phospho-D-ribosyl)imidazole from N(2)-formyl-N(1)-(5-phospho-D-ribosyl)glycinamide: step 1/2. Part of the phosphoribosylformylglycinamidine synthase complex involved in the purines biosynthetic pathway. Catalyzes the ATP-dependent conversion of formylglycinamide ribonucleotide (FGAR) and glutamine to yield formylglycinamidine ribonucleotide (FGAM) and glutamate. The FGAM synthase complex is composed of three subunits. PurQ produces an ammonia molecule by converting glutamine to glutamate. PurL transfers the ammonia molecule to FGAR to form FGAM in an ATP-dependent manner. PurS interacts with PurQ and PurL and is thought to assist in the transfer of the ammonia molecule from PurQ to PurL. The sequence is that of Phosphoribosylformylglycinamidine synthase subunit PurQ from Rhodopseudomonas palustris (strain BisB18).